The primary structure comprises 783 residues: Protein SEY1 (783 aa).

Over 1 to 677 (MTSQAIQLID…KRSIVTSSTH (677 aa)) the chain is Cytoplasmic. The GB1/RHD3-type G domain occupies 33–265 (GFNYHVISVF…YLLKPNYHHK (233 aa)). 43 to 50 (GSQSSGKS) serves as a coordination point for GTP. The stretch at 449 to 472 (HEKKLQLRESELNALLSKIKKQLT) forms a coiled coil. The helical transmembrane segment at 678–698 (IPIWIYAVIVVLGWNEFMIVI) threads the bilayer. Topologically, residues 699–701 (RNP) are lumenal. The helical transmembrane segment at 702-722 (LFVTLALLSIVSFYFIQKFGL) threads the bilayer. At 723 to 783 (WGPVMNVVNT…SSSSGNEDSD (61 aa)) the chain is on the cytoplasmic side.

Belongs to the TRAFAC class dynamin-like GTPase superfamily. GB1/RHD3 GTPase family. RHD3 subfamily.

Its subcellular location is the endoplasmic reticulum membrane. Cooperates with the reticulon proteins and tubule-shaping DP1 family proteins to generate and maintain the structure of the tubular endoplasmic reticulum network. Has GTPase activity, which is required for its function in ER organization. This is Protein SEY1 from Candida glabrata (strain ATCC 2001 / BCRC 20586 / JCM 3761 / NBRC 0622 / NRRL Y-65 / CBS 138) (Yeast).